A 488-amino-acid chain; its full sequence is Glutamyl-tRNA(Gln) amidotransferase subunit A (488 aa).

Active-site charge relay system residues include Lys76 and Ser152. Ser176 (acyl-ester intermediate) is an active-site residue.

The protein belongs to the amidase family. GatA subfamily. In terms of assembly, heterotrimer of A, B and C subunits.

The enzyme catalyses L-glutamyl-tRNA(Gln) + L-glutamine + ATP + H2O = L-glutaminyl-tRNA(Gln) + L-glutamate + ADP + phosphate + H(+). Allows the formation of correctly charged Gln-tRNA(Gln) through the transamidation of misacylated Glu-tRNA(Gln) in organisms which lack glutaminyl-tRNA synthetase. The reaction takes place in the presence of glutamine and ATP through an activated gamma-phospho-Glu-tRNA(Gln). This Oceanobacillus iheyensis (strain DSM 14371 / CIP 107618 / JCM 11309 / KCTC 3954 / HTE831) protein is Glutamyl-tRNA(Gln) amidotransferase subunit A.